The sequence spans 427 residues: Pseudouridylate synthase 1 homolog (427 aa).

The tract at residues 20 to 83 is disordered; sequence GPRPSCSPRM…DEERREKPPK (64 aa). Positions 44–79 are enriched in basic and acidic residues; the sequence is QDRRSCSGRAGGDRVWEDGEHPAKKLKSGGDEERRE. Aspartate 146 functions as the Nucleophile in the catalytic mechanism. The interval 407–427 is disordered; the sequence is GGTGAKVPSPLEGSEGDGDTD. Residues serine 415 and serine 420 each carry the phosphoserine modification. Position 426 is a phosphothreonine (threonine 426).

The protein belongs to the tRNA pseudouridine synthase TruA family. In terms of assembly, monomer. Forms a complex with RARG and the SRA1 RNA in the nucleus. Widely expressed. High levels of expression found in brain and skeletal muscle.

The protein resides in the mitochondrion. The protein localises to the nucleus. It localises to the cytoplasm. It carries out the reaction a uridine in tRNA = a pseudouridine in tRNA. The catalysed reaction is uridine(38/39/40) in tRNA = pseudouridine(38/39/40) in tRNA. The enzyme catalyses a uridine in mRNA = a pseudouridine in mRNA. Pseudouridylate synthase that catalyzes pseudouridylation of tRNAs and mRNAs. Acts on positions 27/28 in the anticodon stem and also positions 34 and 36 in the anticodon of an intron containing tRNA. Also catalyzes pseudouridylation of mRNAs: mediates pseudouridylation of mRNAs with the consensus sequence 5'-UGUAG-3'. Acts as a regulator of pre-mRNA splicing by mediating pseudouridylation of pre-mRNAs at locations associated with alternatively spliced regions. Pseudouridylation of pre-mRNAs near splice sites directly regulates mRNA splicing and mRNA 3'-end processing. Involved in regulation of nuclear receptor activity through pseudouridylation of SRA1 mRNA. The chain is Pseudouridylate synthase 1 homolog from Homo sapiens (Human).